The primary structure comprises 461 residues: Cysteine--tRNA ligase (461 aa).

A Zn(2+)-binding site is contributed by Cys-30. Residues 32–42 (VTIYDLCHIGH) carry the 'HIGH' region motif. Zn(2+)-binding residues include Cys-211, His-236, and Glu-240. A 'KMSKS' region motif is present at residues 268–272 (KMSKS). Lys-271 contacts ATP.

It belongs to the class-I aminoacyl-tRNA synthetase family. As to quaternary structure, monomer. It depends on Zn(2+) as a cofactor.

The protein resides in the cytoplasm. The catalysed reaction is tRNA(Cys) + L-cysteine + ATP = L-cysteinyl-tRNA(Cys) + AMP + diphosphate. The chain is Cysteine--tRNA ligase from Shewanella putrefaciens (strain CN-32 / ATCC BAA-453).